The following is a 100-amino-acid chain: uncharacterized protein (100 aa).

This is an uncharacterized protein from Bacillus subtilis (strain 168).